An 86-amino-acid polypeptide reads, in one-letter code: Small ribosomal subunit protein bS20 (86 aa).

It belongs to the bacterial ribosomal protein bS20 family.

Its function is as follows. Binds directly to 16S ribosomal RNA. The protein is Small ribosomal subunit protein bS20 of Kocuria rhizophila (strain ATCC 9341 / DSM 348 / NBRC 103217 / DC2201).